The sequence spans 184 residues: UPF0316 protein BPUM_0594 (184 aa).

Transmembrane regions (helical) follow at residues 9-29, 41-61, and 67-87; these read AFTMVLIILVINIVYVSFSTM, AAAFAGTIEMLIYVIGLSIVL, and IQNVIAYALGYGMGIIVGMKI.

The protein belongs to the UPF0316 family.

Its subcellular location is the cell membrane. The chain is UPF0316 protein BPUM_0594 from Bacillus pumilus (strain SAFR-032).